The sequence spans 733 residues: Wall-associated receptor kinase 5 (733 aa).

A signal peptide spans 1 to 23 (MKVHSLFLMAIFFYLAYTQLVKA). Topologically, residues 24–330 (QPRDDCQTRC…IDTPKEEPKY (307 aa)) are extracellular. N-linked (GlcNAc...) asparagine glycosylation is found at Asn57, Asn77, Asn110, Asn137, Asn184, Asn206, Asn218, Asn232, and Asn247. One can recognise an EGF-like 1 domain in the interval 231–278 (GNQTCEQVVGRNICGGNSTCFDSTRGKGYNCKCLQGFDGNPYLSDGCQ). Cystine bridges form between Cys235-Cys250, Cys244-Cys261, Cys263-Cys277, Cys283-Cys296, Cys290-Cys305, and Cys307-Cys320. The EGF-like 2; calcium-binding domain maps to 279-321 (DINECTTRIHNCSDTSTCENTLGSFHCQCPSGSDLNTTTMSCI). Asn289 is a glycosylation site (N-linked (GlcNAc...) asparagine). Asn314 carries an N-linked (GlcNAc...) asparagine glycan. The helical transmembrane segment at 331-351 (LGWTTVLLGTTIGFLIILLTI) threads the bilayer. Topologically, residues 352-733 (SYIQQKMRHR…VTRLDIETGR (382 aa)) are cytoplasmic. Residue Thr397 is modified to Phosphothreonine. The Protein kinase domain maps to 408-691 (YNESRILGQG…RVKTTKHQWS (284 aa)). ATP contacts are provided by residues 414–422 (LGQGGQGTV) and Lys436. The residue at position 481 (Tyr481) is a Phosphotyrosine. The Proton acceptor role is filled by Asp533. Residues Thr567 and Thr572 each carry the phosphothreonine modification. At Tyr580 the chain carries Phosphotyrosine.

Belongs to the protein kinase superfamily. Ser/Thr protein kinase family. Predominantly expressed in green tissues such as stems and leaves.

The protein resides in the membrane. It catalyses the reaction L-seryl-[protein] + ATP = O-phospho-L-seryl-[protein] + ADP + H(+). It carries out the reaction L-threonyl-[protein] + ATP = O-phospho-L-threonyl-[protein] + ADP + H(+). Serine/threonine-protein kinase that may function as a signaling receptor of extracellular matrix component. Binding to pectin may have significance in the control of cell expansion, morphogenesis and development. The sequence is that of Wall-associated receptor kinase 5 (WAK5) from Arabidopsis thaliana (Mouse-ear cress).